The sequence spans 601 residues: Secretogranin-2 (601 aa).

Positions Met1–Phe30 are cleaved as a signal peptide. The disordered stretch occupies residues Glu89–Glu109. The span at Thr93–Pro104 shows a compositional bias: polar residues. Tyr151 carries the post-translational modification Sulfotyrosine. Residues Val258–Val273 show a composition bias toward basic and acidic residues. Residues Val258–Asn307 form a disordered region.

This sequence belongs to the chromogranin/secretogranin protein family.

Its subcellular location is the secreted. Its function is as follows. Neuroendocrine protein of the granin family that regulates the biogenesis of secretory granules. The polypeptide is Secretogranin-2 (Pelophylax ridibundus (Marsh frog)).